The chain runs to 88 residues: Small ribosomal subunit protein uS17 (88 aa).

It belongs to the universal ribosomal protein uS17 family. In terms of assembly, part of the 30S ribosomal subunit.

Its function is as follows. One of the primary rRNA binding proteins, it binds specifically to the 5'-end of 16S ribosomal RNA. This chain is Small ribosomal subunit protein uS17, found in Teredinibacter turnerae (strain ATCC 39867 / T7901).